The following is a 183-amino-acid chain: Ribosome rescue factor SmrB (183 aa).

One can recognise a Smr domain in the interval 98-173 (LDLHGLTQKQ…GDAALLVLIE (76 aa)).

The protein belongs to the SmrB family. Associates with collided ribosomes, but not with correctly translating polysomes.

Its function is as follows. Acts as a ribosome collision sensor. Detects stalled/collided disomes (pairs of ribosomes where the leading ribosome is stalled and a second ribosome has collided with it) and endonucleolytically cleaves mRNA at the 5' boundary of the stalled ribosome. Stalled/collided disomes form a new interface (primarily via the 30S subunits) that binds SmrB. Cleaved mRNA becomes available for tmRNA ligation, leading to ribosomal subunit dissociation and rescue of stalled ribosomes. In Erwinia tasmaniensis (strain DSM 17950 / CFBP 7177 / CIP 109463 / NCPPB 4357 / Et1/99), this protein is Ribosome rescue factor SmrB.